We begin with the raw amino-acid sequence, 208 residues long: Protein TIC 20-II, chloroplastic (208 aa).

Residues 1–49 (MASLCLSLHQTLTNPLSAPRCRPLSLSFPGSSTFSIRPSSRRATALTTR) constitute a chloroplast transit peptide. 4 helical membrane-spanning segments follow: residues 61-83 (VISI…FLFA), 101-121 (LYRS…LGVV), 134-154 (AMQA…TRIL), and 172-192 (TGVF…SLLG).

The protein belongs to the Tic20 family. As to quaternary structure, part of the Tic complex. As to expression, expressed in leaves, siliques and roots.

It localises to the plastid. It is found in the chloroplast inner membrane. May be involved in protein precursor import into chloroplasts. Not redundant with TIC20-I, TIC20-IV or TIC20-V. This chain is Protein TIC 20-II, chloroplastic (TIC20-II), found in Arabidopsis thaliana (Mouse-ear cress).